We begin with the raw amino-acid sequence, 202 residues long: ATP-dependent Clp protease proteolytic subunit 1 (202 aa).

The active-site Nucleophile is Ser-102. His-127 is an active-site residue.

This sequence belongs to the peptidase S14 family. As to quaternary structure, fourteen ClpP subunits assemble into 2 heptameric rings which stack back to back to give a disk-like structure with a central cavity, resembling the structure of eukaryotic proteasomes.

It localises to the cytoplasm. The catalysed reaction is Hydrolysis of proteins to small peptides in the presence of ATP and magnesium. alpha-casein is the usual test substrate. In the absence of ATP, only oligopeptides shorter than five residues are hydrolyzed (such as succinyl-Leu-Tyr-|-NHMec, and Leu-Tyr-Leu-|-Tyr-Trp, in which cleavage of the -Tyr-|-Leu- and -Tyr-|-Trp bonds also occurs).. In terms of biological role, cleaves peptides in various proteins in a process that requires ATP hydrolysis. Has a chymotrypsin-like activity. Plays a major role in the degradation of misfolded proteins. This is ATP-dependent Clp protease proteolytic subunit 1 from Agrobacterium fabrum (strain C58 / ATCC 33970) (Agrobacterium tumefaciens (strain C58)).